A 54-amino-acid chain; its full sequence is Ovomucoid (54 aa).

The Kazal-like domain occupies 4 to 54 (VDCSDYPKPVCSPENMPVCGSDSKTYSNKCDFCNAVADSNGTLTLSHFGKC). Cystine bridges form between Cys6/Cys36, Cys14/Cys33, and Cys22/Cys54. N-linked (GlcNAc...) asparagine glycosylation occurs at Asn43.

The protein localises to the secreted. The chain is Ovomucoid from Nycticorax nycticorax (Black-crowned night-heron).